A 387-amino-acid chain; its full sequence is Chaperone protein DnaJ (387 aa).

The 65-residue stretch at 6 to 70 (DYYEILGLSR…EKRAQYDRFG (65 aa)) folds into the J domain. The CR-type zinc-finger motif lies at 130–212 (GVRKDIDVPR…CSGTGRVRNT (83 aa)). Positions 143, 146, 160, 163, 186, 189, 200, and 203 each coordinate Zn(2+). 4 CXXCXGXG motif repeats span residues 143–150 (CSNCSGTG), 160–167 (CPTCGGTG), 186–193 (CSTCRGKG), and 200–207 (CPVCSGTG). A disordered region spans residues 143–162 (CSNCSGTGARPGTSPKRCPT).

Belongs to the DnaJ family. Homodimer. It depends on Zn(2+) as a cofactor.

The protein resides in the cytoplasm. Functionally, participates actively in the response to hyperosmotic and heat shock by preventing the aggregation of stress-denatured proteins and by disaggregating proteins, also in an autonomous, DnaK-independent fashion. Unfolded proteins bind initially to DnaJ; upon interaction with the DnaJ-bound protein, DnaK hydrolyzes its bound ATP, resulting in the formation of a stable complex. GrpE releases ADP from DnaK; ATP binding to DnaK triggers the release of the substrate protein, thus completing the reaction cycle. Several rounds of ATP-dependent interactions between DnaJ, DnaK and GrpE are required for fully efficient folding. Also involved, together with DnaK and GrpE, in the DNA replication of plasmids through activation of initiation proteins. This is Chaperone protein DnaJ from Methanosarcina thermophila.